A 211-amino-acid polypeptide reads, in one-letter code: MDKETYVSEIKSGLKGLPEGEAMIEEIESHIEHHLFRSFQEGKSEEEAMQTLLQAFGTPTDIVSSFKKIQPVTFRAFLMFHLFCNSALFAVGIAITIMHVWLESPFVQAVWKGISVSVWLILAAYMIYWVLIGYQGVKEFGKRGEKLVLHTILISMVPNVIFMLVFLFNVIPAALFQSLLTPWFVGTCAFATLLFPLFGRMGCYIGRRQLV.

A run of 4 helical transmembrane segments spans residues 77–97 (FLMF…AITI), 113–133 (GISV…VLIG), 152–172 (ILIS…NVIP), and 179–199 (LLTP…PLFG).

The protein localises to the cell membrane. This is an uncharacterized protein from Bacillus subtilis (strain 168).